The primary structure comprises 364 residues: Glycerol dehydrogenase (364 aa).

NAD(+)-binding residues include D37, G92, K93, T114, and S117. Position 119 (D119) interacts with glycerol. Positions 123, 125, and 129 each coordinate NAD(+). 3 residues coordinate glycerol: D169, H252, and H269. Residues D169, H252, and H269 each contribute to the Zn(2+) site.

The protein belongs to the iron-containing alcohol dehydrogenase family. Zn(2+) is required as a cofactor.

It carries out the reaction glycerol + NAD(+) = dihydroxyacetone + NADH + H(+). Its pathway is polyol metabolism; glycerol fermentation; glycerone phosphate from glycerol (oxidative route): step 1/2. Its function is as follows. Catalyzes the NAD-dependent oxidation of glycerol to dihydroxyacetone (glycerone). This is Glycerol dehydrogenase (gldA) from Thermotoga maritima (strain ATCC 43589 / DSM 3109 / JCM 10099 / NBRC 100826 / MSB8).